The chain runs to 147 residues: Myoglobin (147 aa).

A Globin domain is found at 2-141 (ADFDMVLKCW…IIADMEADYK (140 aa)). His-60 is a binding site for nitrite. Residue His-60 coordinates O2. His-89 contacts heme b.

It belongs to the globin family. Monomeric.

The protein localises to the cytoplasm. It is found in the sarcoplasm. The catalysed reaction is Fe(III)-heme b-[protein] + nitric oxide + H2O = Fe(II)-heme b-[protein] + nitrite + 2 H(+). It carries out the reaction H2O2 + AH2 = A + 2 H2O. In terms of biological role, monomeric heme protein which primary function is to store oxygen and facilitate its diffusion within muscle tissues. Reversibly binds oxygen through a pentacoordinated heme iron and enables its timely and efficient release as needed during periods of heightened demand. Depending on the oxidative conditions of tissues and cells, and in addition to its ability to bind oxygen, it also has a nitrite reductase activity whereby it regulates the production of bioactive nitric oxide. Under stress conditions, like hypoxia and anoxia, it also protects cells against reactive oxygen species thanks to its pseudoperoxidase activity. The sequence is that of Myoglobin (mb) from Gobionotothen gibberifrons (Humped rockcod).